A 215-amino-acid chain; its full sequence is MNIFRLSGDVCHLIAIIILFLKIWRSKSCAGISGKSQVLFALVFTTRYLDLFTSYISAYNTVMKVVYLLLAYSTVGLIFFRFRNSYDSESDSFRVEFLLVPVAGLSFLENYAFTPLEILWTFSIYLESVAILPQLFMITKTGEAESITAHYLLFLGLYRALYLANWLWRFHTEGFYDQIAVVSGVVQTIFYCDFFYLYFTRVLRGSGKMSLPMPV.

Residues 1–4 (MNIF) lie on the Lumenal side of the membrane. A helical membrane pass occupies residues 5–24 (RLSGDVCHLIAIIILFLKIW). Residues 25 to 32 (RSKSCAGI) lie on the Cytoplasmic side of the membrane. Residues 33 to 52 (SGKSQVLFALVFTTRYLDLF) form a helical membrane-spanning segment. The interaction with the K-D-E-L motif on target proteins stretch occupies residues 47 to 48 (RY). Residues 53–58 (TSYISA) lie on the Lumenal side of the membrane. A helical membrane pass occupies residues 59–79 (YNTVMKVVYLLLAYSTVGLIF). The Cytoplasmic segment spans residues 80-92 (FRFRNSYDSESDS). The chain crosses the membrane as a helical span at residues 93 to 110 (FRVEFLLVPVAGLSFLEN). The Lumenal portion of the chain corresponds to 111 to 116 (YAFTPL). Residues 117–135 (EILWTFSIYLESVAILPQL) form a helical membrane-spanning segment. The Cytoplasmic portion of the chain corresponds to 136–149 (FMITKTGEAESITA). The helical transmembrane segment at 150 to 168 (HYLLFLGLYRALYLANWLW) threads the bilayer. Residues 159 to 169 (RALYLANWLWR) form an interaction with the K-D-E-L motif on target proteins region. Residues 169 to 178 (RFHTEGFYDQ) lie on the Lumenal side of the membrane. Residues 179–199 (IAVVSGVVQTIFYCDFFYLYF) traverse the membrane as a helical segment. Topologically, residues 200 to 215 (TRVLRGSGKMSLPMPV) are cytoplasmic. Positions 204-208 (RGSGK) are important for recycling of cargo proteins with the sequence motif K-D-E-L from the Golgi to the endoplasmic reticulum.

It belongs to the ERD2 family.

The protein localises to the endoplasmic reticulum membrane. The protein resides in the golgi apparatus membrane. It localises to the cytoplasmic vesicle. It is found in the COPI-coated vesicle membrane. Functionally, receptor for the C-terminal sequence motif K-D-E-L that is present on endoplasmic reticulum resident proteins and that mediates their recycling from the Golgi back to the endoplasmic reticulum. The polypeptide is ER lumen protein-retaining receptor 3 (kdelr3) (Danio rerio (Zebrafish)).